Here is a 160-residue protein sequence, read N- to C-terminus: Serine-protein kinase RsbW (160 aa).

This sequence belongs to the anti-sigma-factor family.

The enzyme catalyses L-seryl-[protein] + ATP = O-phospho-L-seryl-[protein] + ADP + H(+). The catalysed reaction is L-threonyl-[protein] + ATP = O-phospho-L-threonyl-[protein] + ADP + H(+). Functionally, negative regulator of sigma-B activity. Phosphorylates and inactivates its specific antagonist protein, RsbV. Upon phosphorylation of RsbV, RsbW is released and binds to sigma-B, thereby blocking its ability to form an RNA polymerase holoenzyme (E-sigma-B). This chain is Serine-protein kinase RsbW, found in Bacillus licheniformis.